A 494-amino-acid polypeptide reads, in one-letter code: 3-octaprenyl-4-hydroxybenzoate carboxy-lyase (494 aa).

Asn-172 serves as a coordination point for Mn(2+). Prenylated FMN contacts are provided by residues 175-177, 189-191, and 194-195; these read IYR, RWL, and RG. Glu-238 provides a ligand contact to Mn(2+). Asp-287 serves as the catalytic Proton donor.

Belongs to the UbiD family. As to quaternary structure, homohexamer. The cofactor is prenylated FMN. Requires Mn(2+) as cofactor.

It localises to the cell membrane. It catalyses the reaction a 4-hydroxy-3-(all-trans-polyprenyl)benzoate + H(+) = a 2-(all-trans-polyprenyl)phenol + CO2. It participates in cofactor biosynthesis; ubiquinone biosynthesis. In terms of biological role, catalyzes the decarboxylation of 3-octaprenyl-4-hydroxy benzoate to 2-octaprenylphenol, an intermediate step in ubiquinone biosynthesis. In Shigella flexneri serotype 5b (strain 8401), this protein is 3-octaprenyl-4-hydroxybenzoate carboxy-lyase.